Consider the following 511-residue polypeptide: Maturase K (511 aa).

This sequence belongs to the intron maturase 2 family. MatK subfamily.

Its subcellular location is the plastid. Usually encoded in the trnK tRNA gene intron. Probably assists in splicing its own and other chloroplast group II introns. The polypeptide is Maturase K (Lathraea clandestina (Purple toothwort)).